The primary structure comprises 356 residues: Protein RecA (356 aa).

Residue Gly69–Thr76 participates in ATP binding.

This sequence belongs to the RecA family.

The protein resides in the cytoplasm. Can catalyze the hydrolysis of ATP in the presence of single-stranded DNA, the ATP-dependent uptake of single-stranded DNA by duplex DNA, and the ATP-dependent hybridization of homologous single-stranded DNAs. It interacts with LexA causing its activation and leading to its autocatalytic cleavage. The sequence is that of Protein RecA from Gloeothece citriformis (strain PCC 7424) (Cyanothece sp. (strain PCC 7424)).